We begin with the raw amino-acid sequence, 131 residues long: Small ribosomal subunit protein uS11 (131 aa).

This sequence belongs to the universal ribosomal protein uS11 family. As to quaternary structure, part of the 30S ribosomal subunit. Interacts with proteins S7 and S18. Binds to IF-3.

Located on the platform of the 30S subunit, it bridges several disparate RNA helices of the 16S rRNA. Forms part of the Shine-Dalgarno cleft in the 70S ribosome. The polypeptide is Small ribosomal subunit protein uS11 (Dictyoglomus turgidum (strain DSM 6724 / Z-1310)).